Here is a 229-residue protein sequence, read N- to C-terminus: DNA mismatch repair protein MutH (229 aa).

It belongs to the MutH family.

The protein resides in the cytoplasm. Its function is as follows. Sequence-specific endonuclease that cleaves unmethylated GATC sequences. It is involved in DNA mismatch repair. This is DNA mismatch repair protein MutH from Shigella boydii serotype 18 (strain CDC 3083-94 / BS512).